The chain runs to 636 residues: Basic helix-loop-helix ARNT-like protein 2 (636 aa).

The segment at 25-62 is disordered; sequence VSSRVSPGTRPTAMGSFSSHMTEFPRKRKGSDSDPSQS. Positions 46 to 258 are interaction with PER2; the sequence is TEFPRKRKGS…SPREKLIDAK (213 aa). The short motif at 49 to 54 is the Nuclear localization signal element; that stretch reads PRKRKG. The region spanning 107–160 is the bHLH domain; sequence AFREAHSQTEKRRRDKMNNLIEELSAMIPQCNPMARKLDKLTVLRMAVQHLRSL. The Nuclear export signal 1 signature appears at 177 to 187; the sequence is LQDNELRHLIL. A PAS 1 domain is found at 178 to 250; sequence QDNELRHLIL…EQLSSFDISP (73 aa). Lys287 is covalently cross-linked (Glycyl lysine isopeptide (Lys-Gly) (interchain with G-Cter in SUMO2 and SUMO3)). Lys294 is covalently cross-linked (Glycyl lysine isopeptide (Lys-Gly) (interchain with G-Cter in SUMO2)). The 71-residue stretch at 357-427 folds into the PAS 2 domain; that stretch reads VPQNSGEINV…DKHKAVLQSK (71 aa). The Nuclear export signal 2 motif lies at 392 to 400; sequence LGYLPQELL. In terms of domain architecture, PAC spans 432–475; sequence TDSYKFRAKDGSFVTLKSQWFSFTNPWTKELEYIVSVNTLVLGH.

As to quaternary structure, component of the circadian core oscillator, which includes the CRY proteins, CLOCK, or NPAS2, BMAL1 or BMAL2, CSNK1D and/or CSNK1E, TIMELESS and the PER proteins. Interacts directly with CLOCK to form the BMAL2-CLOCK transactivator. Can form heterodimers or homodimers which interact directly with CLOCK to form the transcription activator. Interacts with NPAS2 and HIF1A. Interacts with PER2. In terms of tissue distribution, expressed in fetal brain. Highly expressed in brain and placenta. Lower levels in heart, liver, thymus, kidney and lung. Located to endothelial cells and neuronal cells of the suprachiasmatic nucleus (SCN). Also detected in endothelial cells of the heart, lung and kidney. In the brain, specifically expressed in the thalamus, hippocampus and amygdala.

Its subcellular location is the nucleus. In terms of biological role, transcriptional activator which forms a core component of the circadian clock. The circadian clock, an internal time-keeping system, regulates various physiological processes through the generation of approximately 24 hour circadian rhythms in gene expression, which are translated into rhythms in metabolism and behavior. It is derived from the Latin roots 'circa' (about) and 'diem' (day) and acts as an important regulator of a wide array of physiological functions including metabolism, sleep, body temperature, blood pressure, endocrine, immune, cardiovascular, and renal function. Consists of two major components: the central clock, residing in the suprachiasmatic nucleus (SCN) of the brain, and the peripheral clocks that are present in nearly every tissue and organ system. Both the central and peripheral clocks can be reset by environmental cues, also known as Zeitgebers (German for 'timegivers'). The predominant Zeitgeber for the central clock is light, which is sensed by retina and signals directly to the SCN. The central clock entrains the peripheral clocks through neuronal and hormonal signals, body temperature and feeding-related cues, aligning all clocks with the external light/dark cycle. Circadian rhythms allow an organism to achieve temporal homeostasis with its environment at the molecular level by regulating gene expression to create a peak of protein expression once every 24 hours to control when a particular physiological process is most active with respect to the solar day. Transcription and translation of core clock components (CLOCK, NPAS2, BMAL1, BMAL2, PER1, PER2, PER3, CRY1 and CRY2) plays a critical role in rhythm generation, whereas delays imposed by post-translational modifications (PTMs) are important for determining the period (tau) of the rhythms (tau refers to the period of a rhythm and is the length, in time, of one complete cycle). A diurnal rhythm is synchronized with the day/night cycle, while the ultradian and infradian rhythms have a period shorter and longer than 24 hours, respectively. Disruptions in the circadian rhythms contribute to the pathology of cardiovascular diseases, cancer, metabolic syndromes and aging. A transcription/translation feedback loop (TTFL) forms the core of the molecular circadian clock mechanism. Transcription factors, CLOCK or NPAS2 and BMAL1 or BMAL2, form the positive limb of the feedback loop, act in the form of a heterodimer and activate the transcription of core clock genes and clock-controlled genes (involved in key metabolic processes), harboring E-box elements (5'-CACGTG-3') within their promoters. The core clock genes: PER1/2/3 and CRY1/2 which are transcriptional repressors form the negative limb of the feedback loop and interact with the CLOCK|NPAS2-BMAL1|BMAL2 heterodimer inhibiting its activity and thereby negatively regulating their own expression. This heterodimer also activates nuclear receptors NR1D1/2 and RORA/B/G, which form a second feedback loop and which activate and repress BMAL1 transcription, respectively. The CLOCK-BMAL2 heterodimer activates the transcription of SERPINE1/PAI1 and BHLHE40/DEC1. The protein is Basic helix-loop-helix ARNT-like protein 2 of Homo sapiens (Human).